Here is a 430-residue protein sequence, read N- to C-terminus: Sphingosine-1-phosphate phosphatase 1 (430 aa).

The tract at residues 34-103 is disordered; that stretch reads SSPAADEDAE…AGSQRRNSLT (70 aa). S101 carries the post-translational modification Phosphoserine. Phosphothreonine is present on T103. 4 helical membrane-spanning segments follow: residues 121-141, 152-172, 193-213, and 216-236; these read FCLGTELGNELFYILFFPFWI, LVIIWVLVMYLGQCTKDIIRW, MPSTHAMSGTAIPIAMFLLTY, and WQYPLIYGLILIPCWSSLVCL. The interval 167-175 is phosphatase sequence motif I; the sequence is KDIIRWPRP. The tract at residues 194-197 is phosphatase sequence motif II; it reads PSTH. H197 acts as the Proton donor in catalysis. Residues 237-248 form a phosphatase sequence motif III region; that stretch reads SRIYMGMHSILD. Residue H244 is the Nucleophile of the active site. 5 helical membrane-spanning segments follow: residues 246 to 266, 279 to 299, 311 to 331, 348 to 368, and 409 to 429; these read ILDVIAGFLYTILILIIFYPL, YAPLIIIGLHLILGIFSFTLD, ILGSGAGIACGSHAAYTLGLS, VTLFGKAILRIVLGMLLVLFV, and YGMVGFSITFLVPYVFSFIGI.

Belongs to the type 2 lipid phosphate phosphatase family. Highly expressed in liver and kidney. Expressed in epidermis, in the stratum granulosum and the stratum spinosum.

It localises to the endoplasmic reticulum membrane. The protein localises to the cell membrane. It carries out the reaction sphinganine 1-phosphate + H2O = sphinganine + phosphate. The enzyme catalyses sphing-4-enine 1-phosphate + H2O = sphing-4-enine + phosphate. With respect to regulation, inhibited by NaF, sodium orthovanadate, propanolol, and N-ethylmaleimide. In terms of biological role, specifically dephosphorylates sphingosine 1-phosphate (S1P), dihydro-S1P, and phyto-S1P. Does not act on ceramide 1-phosphate, lysophosphatidic acid or phosphatidic acid. Sphingosine-1-phosphate phosphatase activity is needed for efficient recycling of sphingosine into the sphingolipid synthesis pathway. Regulates the intracellular levels of the bioactive sphingolipid metabolite S1P that regulates diverse biological processes acting both as an extracellular receptor ligand or as an intracellular second messenger. Involved in efficient ceramide synthesis from exogenous sphingoid bases. Converts S1P to sphingosine, which is readily metabolized to ceramide via ceramide synthase. In concert with sphingosine kinase 2 (SphK2), recycles sphingosine into ceramide through a phosphorylation/dephosphorylation cycle. Regulates endoplasmic-to-Golgi trafficking of ceramides, resulting in the regulation of ceramide levels in the endoplasmic reticulum, preferentially long-chain ceramide species, and influences the anterograde membrane transport of both ceramide and proteins from the endoplasmic reticulum to the Golgi apparatus. The modulation of intracellular ceramide levels in turn regulates apoptosis. Via S1P levels, modulates resting tone, intracellular Ca(2+) and myogenic vasoconstriction in resistance arteries. Also involved in unfolded protein response (UPR) and ER stress-induced autophagy via regulation of intracellular S1P levels. Involved in the regulation of epidermal homeostasis and keratinocyte differentiation. This Mus musculus (Mouse) protein is Sphingosine-1-phosphate phosphatase 1.